A 331-amino-acid polypeptide reads, in one-letter code: D-aspartate oxidase 2 (331 aa).

FAD contacts are provided by Asp35, Lys36, Ser43, and Gly307.

This sequence belongs to the DAMOX/DASOX family. It depends on FAD as a cofactor.

Its subcellular location is the cytoplasm. It carries out the reaction D-aspartate + O2 + H2O = oxaloacetate + H2O2 + NH4(+). It catalyses the reaction D-glutamate + O2 + H2O = H2O2 + 2-oxoglutarate + NH4(+). In terms of biological role, selectively catalyzes the oxidative deamination of acidic amino acids. May play a role in the egg-laying events and early development of the worm, in addition to quality control of the germ cells. In Caenorhabditis briggsae, this protein is D-aspartate oxidase 2.